Here is a 250-residue protein sequence, read N- to C-terminus: MSGHSKWATIKRKKAVTDQKRGSLFTKLVKEITIAAKMGGGDPSGNPRLRLAIDTARSNSMPMDNIQRAVKKGTGELEGVIYDEITYEGYGPAGIALIIETATDNRNRTVADLRHIMSRNNGSLGESGSVSWMFQRKGSLEVPVSAASEEALMEALLEAGLEDLSNDGGETYTVITDVRDLEAAKKALEEQAIAFENAKMDLIPENYIELEAEDARKVIKLIDALEENDDVQAVYSNMEISESAMNSLED.

Belongs to the TACO1 family.

Its subcellular location is the cytoplasm. The polypeptide is Probable transcriptional regulatory protein Plut_1643 (Chlorobium luteolum (strain DSM 273 / BCRC 81028 / 2530) (Pelodictyon luteolum)).